Here is a 258-residue protein sequence, read N- to C-terminus: Tegument protein VP22 (258 aa).

The tract at residues 66–143 (VQPAARGRDR…RAPPGANAVA (78 aa)) is disordered. Over residues 77–118 (AAAGTTVAAPAAAPARRSSSRASSRPPRAAADPPVLRPATRG) the composition is skewed to low complexity. Residues 131-134 (PRPR) carry the Nuclear localization signal motif. The Nuclear export signal signature appears at 204-216 (LDRMLKSAAIRIL). The segment at 234-258 (RAQRPAARGSTSGGESRLRGERARP) is disordered. A compositionally biased stretch (basic and acidic residues) spans 249–258 (SRLRGERARP).

It belongs to the alphaherpesvirinae VP22 tegument protein family. Interacts with gE (via C-terminus); this interaction is necessary for the recruitment of VP22 to the Golgi and its packaging into virions. Interacts with gM (via C-terminus). Interacts with VP16; this interaction allows the formation of a tripartite complex composed of VP16, VP22 and UL41/VHS. Interacts with the capsid-binding protein UL16. Interacts with host CGAS. Post-translationally, highly phosphorylated in the host cell. Packaging is selective for underphosphorylated forms.

The protein localises to the virion tegument. It localises to the host cytoplasm. It is found in the host nucleus. The protein resides in the host Golgi apparatus. Functionally, tegument protein that plays different roles during the time course of infection. Participates in both the accumulation of viral mRNAs and viral protein translation at late time of infection. Modulates the RNase activity of the virion host shutoff protein UL41 probably to ensure necessary levels of key cellular mRNAs and proteins. Plays a role in microtubule reorganization that occurs after viral infection by stabilizing microtubule network. Plays a role in the inhibition of host innate immune system by targeting the CGAS enzymatic activity which is the principal cytosolic DNA sensor that detects invading viral DNA. Acts by mediating disruption of liquid-like droplets in which CGAS is activated, thereby preventing CGAS activity. The sequence is that of Tegument protein VP22 from Bovine herpesvirus 1.1 (strain Cooper) (BoHV-1).